The following is a 158-amino-acid chain: Large ribosomal subunit protein mL50 (158 aa).

The protein belongs to the mitochondrion-specific ribosomal protein mL50 family. As to quaternary structure, component of the mitochondrial ribosome large subunit (39S) which comprises a 16S rRNA and about 50 distinct proteins.

The protein localises to the mitochondrion. This is Large ribosomal subunit protein mL50 (MRPL50) from Pongo abelii (Sumatran orangutan).